Consider the following 394-residue polypeptide: Actin-related protein 2-B (394 aa).

Residues 160–162 (GDG), 214–218 (RMMKE), and 305–310 (GGSTMY) contribute to the ATP site.

Belongs to the actin family. ARP2 subfamily. Component of the Arp2/3 complex composed of actr2/arp2, actr3/arp3, arpc1b, arpc2, arpc3, arpc4 and arpc5.

It is found in the cytoplasm. Its subcellular location is the cytoskeleton. The protein localises to the cell projection. The protein resides in the nucleus. Its function is as follows. ATP-binding component of the Arp2/3 complex, a multiprotein complex that mediates actin polymerization upon stimulation by nucleation-promoting factor (NPF). The Arp2/3 complex mediates the formation of branched actin networks in the cytoplasm, providing the force for cell motility. Seems to contact the pointed end of the daughter actin filament. In addition to its role in the cytoplasmic cytoskeleton, the Arp2/3 complex also promotes actin polymerization in the nucleus, thereby regulating gene transcription and repair of damaged DNA. The Arp2/3 complex promotes homologous recombination (HR) repair in response to DNA damage by promoting nuclear actin polymerization, leading to drive motility of double-strand breaks (DSBs). In Danio rerio (Zebrafish), this protein is Actin-related protein 2-B (actr2b).